A 776-amino-acid chain; its full sequence is Systemic RNA interference defective protein 1 (776 aa).

A signal peptide spans 1 to 17; sequence MIRVYLIILMHLVIGLT. The Extracellular segment spans residues 18-319; it reads QNNSTTPSPI…ENQSYAVPTA (302 aa). 8 N-linked (GlcNAc...) asparagine glycosylation sites follow: N19, N20, N32, N205, N210, N234, N290, and N311. The interval 22-312 is involved in dsRNA-binding; the sequence is TTPSPIITSS…SFEFKKLENQ (291 aa). A helical transmembrane segment spans residues 320–340; the sequence is LMMIFLTTPCLLFLPIVINII. The Cytoplasmic portion of the chain corresponds to 341–429; it reads KNSRKLAPSQ…KQDSLSLHGQ (89 aa). Residues 360–390 form a disordered region; sequence PSEQRDMDLSHDEQQNTSSELENNGEIPAAE. Residues 362–373 show a composition bias toward basic and acidic residues; sequence EQRDMDLSHDEQ. Residues 430-450 form a helical membrane-spanning segment; the sequence is MLQYPVAIILPVLMHTAIEFH. The Extracellular segment spans residues 451-481; the sequence is KWTTSTMANRDEMCFHNHACARPLGELRAWN. The helical transmembrane segment at 482–502 threads the bilayer; sequence NIITNIGYTLYGAIFIVLSIC. At 503–510 the chain is on the cytoplasmic side; the sequence is RRGRHEYS. The helical transmembrane segment at 511–531 threads the bilayer; the sequence is HVFGTYECTLLDVTIGVFMVL. The Extracellular portion of the chain corresponds to 532 to 543; that stretch reads QSIASATYHICP. A helical membrane pass occupies residues 544–564; the sequence is SDVAFQFDTPCIQVICGLLMV. The Cytoplasmic segment spans residues 565–575; sequence RQWFVRHESPS. Residues 576–596 form a helical membrane-spanning segment; the sequence is PAYTNILLVGVVSLNFLISAF. The Extracellular portion of the chain corresponds to 597–599; it reads SKT. A helical membrane pass occupies residues 600–620; the sequence is SYVRFIIAVIHVIVVGSICLA. The Cytoplasmic segment spans residues 621–633; sequence KERSLGSEKLKTR. The helical transmembrane segment at 634 to 654 threads the bilayer; sequence FFIMAFSMGNFAAIVMYLTLS. The Extracellular portion of the chain corresponds to 655–659; the sequence is AFHLN. Residues 660–680 form a helical membrane-spanning segment; it reads QIATYCFIINCIMYLMYYGCM. The Cytoplasmic segment spans residues 681–691; sequence KVLHSERITSK. The chain crosses the membrane as a helical span at residues 692–712; the sequence is AKLCGALSLLAWAVAGFFFFQ. The Extracellular segment spans residues 713-741; the sequence is DDTDWTRSAAASRALNKPCLLLGFFGSHD. The chain crosses the membrane as a helical span at residues 742 to 762; sequence LWHIFGALAGLFTFIFVSFVD. Topologically, residues 763 to 776 are cytoplasmic; sequence DDLINTRKTSINIF.

The protein belongs to the SID1 family. As to quaternary structure, may self-associate to form multimers. Expressed in most non-neuronal cells, including body wall muscle cells.

The protein resides in the cell membrane. Plays a role in RNA-mediated gene silencing by acting cell-autonomously as a channel for the transport of double-stranded RNA (dsRNA) between cells. Mediates the spread of dsRNA and subsequent silencing of genes in cells distant from the site of dsRNA introduction. Selective for dsRNA. Preferentially binds long dsRNA, from 50 base pairs up to 700. Short 20 base-pair long molecules are not bound. May also bind dsDNA, but with lower affinity. Binding may be sequence-independent. Required for avoidance behavior induced by small RNAs derived from pathogenic bacteria such as P.aeruginosa. This Caenorhabditis elegans protein is Systemic RNA interference defective protein 1.